Here is a 158-residue protein sequence, read N- to C-terminus: UPF0758 protein YkfG (158 aa).

In terms of domain architecture, MPN spans 36–158; it reads AFTSTHAVRE…IYSFAEHGLL (123 aa). Positions 107, 109, and 120 each coordinate Zn(2+). The short motif at 107 to 120 is the JAMM motif element; it reads HNHPSGETTPSQAD.

This sequence belongs to the UPF0758 family.

This Escherichia coli (strain K12) protein is UPF0758 protein YkfG (ykfG).